The chain runs to 187 residues: Protein GrpE (187 aa).

The span at 1–15 (MKETKQEEMEVREDC) shows a compositional bias: basic and acidic residues. Residues 1–40 (MKETKQEEMEVREDCESVDSNLEATVEEMESTKGTSEDLE) form a disordered region.

The protein belongs to the GrpE family. As to quaternary structure, homodimer.

The protein resides in the cytoplasm. Its function is as follows. Participates actively in the response to hyperosmotic and heat shock by preventing the aggregation of stress-denatured proteins, in association with DnaK and GrpE. It is the nucleotide exchange factor for DnaK and may function as a thermosensor. Unfolded proteins bind initially to DnaJ; upon interaction with the DnaJ-bound protein, DnaK hydrolyzes its bound ATP, resulting in the formation of a stable complex. GrpE releases ADP from DnaK; ATP binding to DnaK triggers the release of the substrate protein, thus completing the reaction cycle. Several rounds of ATP-dependent interactions between DnaJ, DnaK and GrpE are required for fully efficient folding. This chain is Protein GrpE, found in Alkaliphilus oremlandii (strain OhILAs) (Clostridium oremlandii (strain OhILAs)).